The primary structure comprises 770 residues: DNA topoisomerase 1 (770 aa).

In terms of domain architecture, Toprim spans 4–140 (FRIIIAEKAD…EIRRAKFSAL (137 aa)). Glu-10 and Asp-109 together coordinate Mg(2+). In terms of domain architecture, Topo IA-type catalytic spans 156-563 (NYSLADAADA…ESKKMLHEVL (408 aa)). An interaction with DNA region spans residues 194 to 199 (SAGRVQ). Tyr-312 serves as the catalytic O-(5'-phospho-DNA)-tyrosine intermediate. C4-type zinc fingers lie at residues 611–638 (CEDP…CPVC), 673–700 (CPAD…YPKC), and 719–744 (CPYC…NMQC).

The protein belongs to the type IA topoisomerase family. In terms of assembly, monomer. It depends on Mg(2+) as a cofactor.

The catalysed reaction is ATP-independent breakage of single-stranded DNA, followed by passage and rejoining.. In terms of biological role, releases the supercoiling and torsional tension of DNA, which is introduced during the DNA replication and transcription, by transiently cleaving and rejoining one strand of the DNA duplex. Introduces a single-strand break via transesterification at a target site in duplex DNA. The scissile phosphodiester is attacked by the catalytic tyrosine of the enzyme, resulting in the formation of a DNA-(5'-phosphotyrosyl)-enzyme intermediate and the expulsion of a 3'-OH DNA strand. The free DNA strand then undergoes passage around the unbroken strand, thus removing DNA supercoils. Finally, in the religation step, the DNA 3'-OH attacks the covalent intermediate to expel the active-site tyrosine and restore the DNA phosphodiester backbone. In Thermoplasma acidophilum (strain ATCC 25905 / DSM 1728 / JCM 9062 / NBRC 15155 / AMRC-C165), this protein is DNA topoisomerase 1.